Here is a 427-residue protein sequence, read N- to C-terminus: Imidazolonepropionase (427 aa).

2 residues coordinate Fe(3+): H78 and H80. Positions 78 and 80 each coordinate Zn(2+). 4-imidazolone-5-propanoate is bound by residues R87, Y150, and H183. N-formimidoyl-L-glutamate is bound at residue Y150. Residue H255 participates in Fe(3+) binding. Residue H255 coordinates Zn(2+). Residue E258 participates in 4-imidazolone-5-propanoate binding. D330 lines the Fe(3+) pocket. D330 serves as a coordination point for Zn(2+). Positions 332 and 334 each coordinate N-formimidoyl-L-glutamate. T335 contacts 4-imidazolone-5-propanoate.

This sequence belongs to the metallo-dependent hydrolases superfamily. HutI family. Requires Zn(2+) as cofactor. It depends on Fe(3+) as a cofactor.

The protein resides in the cytoplasm. It carries out the reaction 4-imidazolone-5-propanoate + H2O = N-formimidoyl-L-glutamate. It functions in the pathway amino-acid degradation; L-histidine degradation into L-glutamate; N-formimidoyl-L-glutamate from L-histidine: step 3/3. Its function is as follows. Catalyzes the hydrolytic cleavage of the carbon-nitrogen bond in imidazolone-5-propanoate to yield N-formimidoyl-L-glutamate. It is the third step in the universal histidine degradation pathway. The chain is Imidazolonepropionase from Herpetosiphon aurantiacus (strain ATCC 23779 / DSM 785 / 114-95).